We begin with the raw amino-acid sequence, 342 residues long: Holliday junction branch migration complex subunit RuvB (342 aa).

The segment at 1-21 is disordered; sequence MSVEHSPVDPSAEPPEKAEEA. Residues 1–184 form a large ATPase domain (RuvB-L) region; sequence MSVEHSPVDP…FGFTAQLDYY (184 aa). ATP is bound by residues Leu-23, Arg-24, Gly-65, Lys-68, Thr-69, Thr-70, 131 to 133, Arg-174, Tyr-184, and Arg-221; that span reads EDF. Residue Thr-69 participates in Mg(2+) binding. The interval 185 to 255 is small ATPAse domain (RuvB-S); the sequence is EVADLERIVT…GAETALDLYE (71 aa). The interval 258–342 is head domain (RuvB-H); the sequence is PLGLDRLDRA…PPDSSGEGLF (85 aa). DNA is bound by residues Arg-313 and Arg-318.

This sequence belongs to the RuvB family. Homohexamer. Forms an RuvA(8)-RuvB(12)-Holliday junction (HJ) complex. HJ DNA is sandwiched between 2 RuvA tetramers; dsDNA enters through RuvA and exits via RuvB. An RuvB hexamer assembles on each DNA strand where it exits the tetramer. Each RuvB hexamer is contacted by two RuvA subunits (via domain III) on 2 adjacent RuvB subunits; this complex drives branch migration. In the full resolvosome a probable DNA-RuvA(4)-RuvB(12)-RuvC(2) complex forms which resolves the HJ.

It localises to the cytoplasm. The catalysed reaction is ATP + H2O = ADP + phosphate + H(+). In terms of biological role, the RuvA-RuvB-RuvC complex processes Holliday junction (HJ) DNA during genetic recombination and DNA repair, while the RuvA-RuvB complex plays an important role in the rescue of blocked DNA replication forks via replication fork reversal (RFR). RuvA specifically binds to HJ cruciform DNA, conferring on it an open structure. The RuvB hexamer acts as an ATP-dependent pump, pulling dsDNA into and through the RuvAB complex. RuvB forms 2 homohexamers on either side of HJ DNA bound by 1 or 2 RuvA tetramers; 4 subunits per hexamer contact DNA at a time. Coordinated motions by a converter formed by DNA-disengaged RuvB subunits stimulates ATP hydrolysis and nucleotide exchange. Immobilization of the converter enables RuvB to convert the ATP-contained energy into a lever motion, pulling 2 nucleotides of DNA out of the RuvA tetramer per ATP hydrolyzed, thus driving DNA branch migration. The RuvB motors rotate together with the DNA substrate, which together with the progressing nucleotide cycle form the mechanistic basis for DNA recombination by continuous HJ branch migration. Branch migration allows RuvC to scan DNA until it finds its consensus sequence, where it cleaves and resolves cruciform DNA. This chain is Holliday junction branch migration complex subunit RuvB, found in Cutibacterium acnes (strain DSM 16379 / KPA171202) (Propionibacterium acnes).